The chain runs to 1741 residues: MALSPNVIAALQIMYTGRGVSASDLNWWATDGANITYAEAVALFASSPDAAIKYPFFQAPQTADKRQYVAQVFANLYNIDINDTSLVPTEELDYWINWLSLSPDNYLDFPNALNNASAAAGLTDRLEALTNKADVSLSYTEALSTAGVNTFTEAQYAEAAGIIATVDDTNASVLAAEAQIVEIAASLSVFTIAQAQATPNLPPAYTISDTADNLIAGADDPVVTGANNVIANQSPAAPLSVEDANILLATADELAAGVTWDILDTAADVLAGGAAVSGAASVGITDIVDVATASQLLALGNFDGVYAIADTSANIVADPGVSGGATAITLSDPDVPVSVASATFLQGLGIPVGPSYIVEDTSANILAALSTPAIVNAAEVIVNNTDVPLSVAQAEDLLSLPNLNAGFTYIIADTLDNLSAAPSTLLDGAVSYSLTNTNPDLGVITEAEAVIVNGATNASDFNFLVADVILTPQADIRSGNSFLSVAVVEGGSIFNTLNSNDRLTGTGEDPTLSLTWQEATFGNINTIFPVLDGIETLVATLIENDLTLVSNDFDVVGQGFITGLKNVAASGTKGGDLELINLQTALETVSVTNYFFGDDVSFSIADPELAGDNDLLLLTVDQVTEDGPDVTSIKISDFSGNGGYETLGLTSGVTTSSKGNTNTVDIEGIVAVESIGITGIENLTLSTSLIGSVVKVDATGSALIPEFEGREVFTGDLKAFFDDRPGGDITFLSGSGNDEISIARDAFTLSEDLKDVISKGHILDGGAGNDELTITGDAFSDTDAGHTVIGGEGNDSILLTGVAEGPIAGHVVNSFDLINEVGGAGDDDINISGDAIGDSAGHVVFGGAGEDDIFIGFDKTLAVSGNGAALGVDLAGHVVFAGDDDDTVRITGDSFTSDSANGSGHSVEGGTGDDLIEISGDALTADPDSETIANPFFDDSEPSDLDLFIAADQPIPTTEEQYQVLLAQLGLPADYNPRNFIRGVAAISGAHTVRGGEGNDVILFGPIAGEPGNGDGQHLAFGDEGDDFIEMTGIGSVEFNGGAGDDTLVGGDGDPILGFGNDILNGDEGNDFLFGGKGNDNLQGGEGDDIMSGGEGDDFFFVDAGFDVIEDLGDANSETGDQFQVSEDAEAEIRVVQDWEATGLTFNLGIATLTIENPGGGSVDLSASNVPPNTNGYTVIGNIGDDEIIGSRDDDSIFGGRGEDSIAGLGGDDIIEGNDDDDFISGDSLLLPLLPLEEILPFGNDDIDAGSGNDVIAGDLLVVTGDDIDLNLFNGGKDTIEAGLGSDITVGDWSIGAFGDIDLNASLERTAIGGDDTITTKQGDNGIVFPIGQVAIDNFLVGDLAAAVDGVGNDIFLTETLTVIGGDDTMTGADGLDVIVGDVGLFGFEFNDSEINLTNFKLGQVNGSTVSAGDDSITGEGGNDILVGDLFVGVINNNGIIIDGGKGFQLGKDGTTSFIGGDDSISGGDGNDFLAGDFVLVDQLSAPFDPLDPNDWTFVNPYATLQGQAGDSKAQAAQAAINLAQLRLEFRAVGGDDELVGGRGNDTFYGGLGADTIDIGNDVTVGGVGVNGANEIWYMNGAFENAAVNGANVDNITGFNVNNDKFVFAAGANNFLSGDATSGLAVQRVLNLQAGNTVFNLNDPILNASANNINDVFLAVNADNSVGASLSFSLLPGLPSLVEMQQINVSSGALAGREFLFINNGVAAVSSQDDFLVELTGISGTFGLDLTPNFEVREFYA.

A compositionally biased stretch (polar residues) spans 894–904 (SFTSDSANGSG). The tract at residues 894-913 (SFTSDSANGSGHSVEGGTGD) is disordered.

In terms of processing, glycosylated.

Its subcellular location is the secreted. The protein resides in the cell wall. The protein localises to the S-layer. In terms of biological role, S-layer protein. The S-layer is a paracrystalline mono-layered assembly of proteins which coats the surface of bacteria. Under laboratory conditions, has a supportive but not a critical role in the function of the cyanobacterium. Shows no apparent hemolytic activity against sheep erythrocytes, however, a slight hemolytic activity is detected during the conformational change caused by the rebinding of Ca(2+). In Synechocystis sp. (strain ATCC 27184 / PCC 6803 / Kazusa), this protein is S-layer protein.